The sequence spans 129 residues: Small ribosomal subunit protein uS9 (129 aa).

The protein belongs to the universal ribosomal protein uS9 family.

This chain is Small ribosomal subunit protein uS9, found in Chlorobium luteolum (strain DSM 273 / BCRC 81028 / 2530) (Pelodictyon luteolum).